The chain runs to 287 residues: Arylamine N-acetyltransferase, liver isozyme (287 aa).

Catalysis depends on C68, which acts as the Acyl-thioester intermediate. Active-site residues include H107 and D122.

Belongs to the arylamine N-acetyltransferase family.

It catalyses the reaction an arylamine + acetyl-CoA = an N-acetylarylamine + CoA. The sequence is that of Arylamine N-acetyltransferase, liver isozyme from Gallus gallus (Chicken).